The sequence spans 299 residues: Glycine--tRNA ligase alpha subunit (299 aa).

This sequence belongs to the class-II aminoacyl-tRNA synthetase family. As to quaternary structure, tetramer of two alpha and two beta subunits.

The protein resides in the cytoplasm. It catalyses the reaction tRNA(Gly) + glycine + ATP = glycyl-tRNA(Gly) + AMP + diphosphate. The chain is Glycine--tRNA ligase alpha subunit from Dictyoglomus thermophilum (strain ATCC 35947 / DSM 3960 / H-6-12).